The following is a 194-amino-acid chain: Large ribosomal subunit protein uL6m (194 aa).

It belongs to the universal ribosomal protein uL6 family.

Its subcellular location is the mitochondrion. The polypeptide is Large ribosomal subunit protein uL6m (RPL6) (Prototheca wickerhamii).